Here is a 197-residue protein sequence, read N- to C-terminus: Syndecan-4 (197 aa).

The first 19 residues, 1–19 (MPLPRAAFLLGLLLAAAAA), serve as a signal peptide directing secretion. Topologically, residues 20–147 (ESVRETETMD…SIFERTEVLT (128 aa)) are extracellular. Residues Ser38, Ser65, and Ser67 are each glycosylated (O-linked (Xyl...) (glycosaminoglycan) serine). 2 N-linked (GlcNAc...) asparagine glycosylation sites follow: Asn124 and Asn136. The helical transmembrane segment at 148–168 (ALIAGGAVGLLFAVFLILLLV) threads the bilayer. Residues 169 to 197 (YRMKKKDEGSYDLGKKPIYKKAPTNEFYA) lie on the Cytoplasmic side of the membrane.

This sequence belongs to the syndecan proteoglycan family. In terms of assembly, interacts with SDOS. O-glycosylated; contains both chondroitin sulfate and heparan sulfate. Ser-38, Ser-65 and Ser-67 can all be modified by either chondroitin sulfate or heparan sulfate, and the protein exists in forms that contain only chondroitin sulfate, only heparan sulfate and both chondroitin sulfate and heparan sulfate.

It is found in the membrane. Its function is as follows. Cell surface proteoglycan which regulates exosome biogenesis in concert with SDCBP and PDCD6IP. The chain is Syndecan-4 (SDC4) from Gallus gallus (Chicken).